The chain runs to 549 residues: Cytochrome c oxidase subunit 1 homolog, bacteroid (549 aa).

3 helical membrane-spanning segments follow: residues 12–32 (IGES…VIAA), 39–59 (PFAF…FCIV), and 87–107 (FSSF…LIIA). Histidine 131 contacts heme b. A run of 8 helical transmembrane segments spans residues 132–152 (TSAV…FYVV), 168–188 (FVVV…LLGV), 201–221 (ADLW…ATII), 228–248 (IFVA…LHLG), 279–299 (GHNA…YYFI), 312–332 (LSII…PHHL), 344–364 (LGMT…INGL), and 382–402 (MLVV…MMSI). Residues histidine 280, histidine 330, and histidine 331 each contribute to the Cu cation site. The heme b site is built by histidine 418 and histidine 420. The next 3 helical transmembrane spans lie at 423–443 (ALGW…PWAW), 458–478 (FWVA…SGIL), and 512–532 (AGGG…WMTV).

This sequence belongs to the heme-copper respiratory oxidase family. It depends on Cu(2+) as a cofactor. Heme b is required as a cofactor.

Its subcellular location is the cell membrane. It catalyses the reaction 4 Fe(II)-[cytochrome c] + O2 + 8 H(+)(in) = 4 Fe(III)-[cytochrome c] + 2 H2O + 4 H(+)(out). It participates in energy metabolism; oxidative phosphorylation. Functionally, cytochrome c oxidase is the component of the respiratory chain that catalyzes the reduction of oxygen to water. Subunits 1-3 form the functional core of the enzyme complex. Co I is the catalytic subunit of the enzyme. Electrons originating in cytochrome c or a quinol are transferred to the bimetallic center formed by a high-spin heme and copper B. This Bradyrhizobium diazoefficiens (strain JCM 10833 / BCRC 13528 / IAM 13628 / NBRC 14792 / USDA 110) protein is Cytochrome c oxidase subunit 1 homolog, bacteroid (fixN).